The chain runs to 306 residues: 3-methyl-2-oxobutanoate hydroxymethyltransferase (306 aa).

Mg(2+) contacts are provided by aspartate 53 and aspartate 96. Residues 53–54 (DS), aspartate 96, and lysine 126 contribute to the 3-methyl-2-oxobutanoate site. Glutamate 128 is a Mg(2+) binding site. Catalysis depends on glutamate 195, which acts as the Proton acceptor.

This sequence belongs to the PanB family. Homodecamer; pentamer of dimers. The cofactor is Mg(2+).

Its subcellular location is the cytoplasm. The catalysed reaction is 3-methyl-2-oxobutanoate + (6R)-5,10-methylene-5,6,7,8-tetrahydrofolate + H2O = 2-dehydropantoate + (6S)-5,6,7,8-tetrahydrofolate. It functions in the pathway cofactor biosynthesis; (R)-pantothenate biosynthesis; (R)-pantoate from 3-methyl-2-oxobutanoate: step 1/2. In terms of biological role, catalyzes the reversible reaction in which hydroxymethyl group from 5,10-methylenetetrahydrofolate is transferred onto alpha-ketoisovalerate to form ketopantoate. In Anaeromyxobacter sp. (strain K), this protein is 3-methyl-2-oxobutanoate hydroxymethyltransferase.